The sequence spans 143 residues: Large ribosomal subunit protein uL13 (143 aa).

The protein belongs to the universal ribosomal protein uL13 family. Part of the 50S ribosomal subunit.

This protein is one of the early assembly proteins of the 50S ribosomal subunit, although it is not seen to bind rRNA by itself. It is important during the early stages of 50S assembly. The polypeptide is Large ribosomal subunit protein uL13 (Neisseria meningitidis serogroup C (strain 053442)).